We begin with the raw amino-acid sequence, 112 residues long: Probable small nuclear ribonucleoprotein Sm D2 (112 aa).

Basic and acidic residues predominate over residues 1–15 (MSRMNDETMEDKPDD). Residues 1–23 (MSRMNDETMEDKPDDSNGPLSIL) are disordered. Positions 20–106 (LSILMDSVNN…VILVLKNPLG (87 aa)) constitute a Sm domain.

It belongs to the snRNP core protein family.

It is found in the nucleus. The protein resides in the cytoplasm. It localises to the cytosol. Functionally, plays a role in pre-mRNA splicing as a core component of the spliceosomal U1, U2, U4 and U5 small nuclear ribonucleoproteins (snRNPs), the building blocks of the spliceosome. In Dictyostelium discoideum (Social amoeba), this protein is Probable small nuclear ribonucleoprotein Sm D2 (snrpd2).